The chain runs to 112 residues: Probable prefoldin subunit 1 (112 aa).

This sequence belongs to the prefoldin subunit beta family. As to quaternary structure, heterohexamer of two PFD-alpha type and four PFD-beta type subunits.

Its function is as follows. Binds specifically to cytosolic chaperonin (c-CPN) and transfers target proteins to it. Binds to nascent polypeptide chain and promotes folding in an environment in which there are many competing pathways for nonnative proteins. In Schizosaccharomyces pombe (strain 972 / ATCC 24843) (Fission yeast), this protein is Probable prefoldin subunit 1.